The chain runs to 216 residues: MPTLLHLDASPRRRSISRDIGAAFADSWRATAPNGHYIHRDLAADPVPFIDAAWTEICDAVLAAGGTDLAALPTLVRTPAQAAAWRIVEPLLDELLAADVVLIGTPMYNYSIPAALKAWLDQVTFPRMSLAPRRFVVAAARGGSYSPGTPKAAFDHQERYLRDFFAGHFAVTDTVFVTAELANARQDPALAARRAEHDASYADALDTARRLGKEYR.

FMN-binding positions include Ser10 and 15 to 17; that span reads SIS.

This sequence belongs to the azoreductase type 1 family. As to quaternary structure, homodimer. Requires FMN as cofactor.

The catalysed reaction is 2 a quinone + NADH + H(+) = 2 a 1,4-benzosemiquinone + NAD(+). It catalyses the reaction N,N-dimethyl-1,4-phenylenediamine + anthranilate + 2 NAD(+) = 2-(4-dimethylaminophenyl)diazenylbenzoate + 2 NADH + 2 H(+). In terms of biological role, quinone reductase that provides resistance to thiol-specific stress caused by electrophilic quinones. Functionally, also exhibits azoreductase activity. Catalyzes the reductive cleavage of the azo bond in aromatic azo compounds to the corresponding amines. This chain is FMN-dependent NADH:quinone oxidoreductase, found in Nocardia farcinica (strain IFM 10152).